Here is a 226-residue protein sequence, read N- to C-terminus: ATP synthase F(0) complex subunit a (226 aa).

Residue methionine 1 is modified to N-formylmethionine. The next 6 helical transmembrane spans lie at 9–29 (FITP…FPSL), 68–88 (WTLM…LGLL), 97–117 (QLSM…ITGF), 138–158 (IPML…ALAV), 164–184 (ITAG…LMSI), and 189–209 (ALIT…VAMI).

The protein belongs to the ATPase A chain family. In terms of assembly, component of the ATP synthase complex composed at least of ATP5F1A/subunit alpha, ATP5F1B/subunit beta, ATP5MC1/subunit c (homooctomer), MT-ATP6/subunit a, MT-ATP8/subunit 8, ATP5ME/subunit e, ATP5MF/subunit f, ATP5MG/subunit g, ATP5MK/subunit k, ATP5MJ/subunit j, ATP5F1C/subunit gamma, ATP5F1D/subunit delta, ATP5F1E/subunit epsilon, ATP5PF/subunit F6, ATP5PB/subunit b, ATP5PD/subunit d, ATP5PO/subunit OSCP. ATP synthase complex consists of a soluble F(1) head domain (subunits alpha(3) and beta(3)) - the catalytic core - and a membrane F(0) domain - the membrane proton channel (subunits c, a, 8, e, f, g, k and j). These two domains are linked by a central stalk (subunits gamma, delta, and epsilon) rotating inside the F1 region and a stationary peripheral stalk (subunits F6, b, d, and OSCP). Interacts with DNAJC30; interaction is direct.

Its subcellular location is the mitochondrion inner membrane. It catalyses the reaction H(+)(in) = H(+)(out). Functionally, subunit a, of the mitochondrial membrane ATP synthase complex (F(1)F(0) ATP synthase or Complex V) that produces ATP from ADP in the presence of a proton gradient across the membrane which is generated by electron transport complexes of the respiratory chain. ATP synthase complex consist of a soluble F(1) head domain - the catalytic core - and a membrane F(1) domain - the membrane proton channel. These two domains are linked by a central stalk rotating inside the F(1) region and a stationary peripheral stalk. During catalysis, ATP synthesis in the catalytic domain of F(1) is coupled via a rotary mechanism of the central stalk subunits to proton translocation. With the subunit c (ATP5MC1), forms the proton-conducting channel in the F(0) domain, that contains two crucial half-channels (inlet and outlet) that facilitate proton movement from the mitochondrial intermembrane space (IMS) into the matrix. Protons are taken up via the inlet half-channel and released through the outlet half-channel, following a Grotthuss mechanism. This chain is ATP synthase F(0) complex subunit a, found in Bos taurus (Bovine).